A 225-amino-acid polypeptide reads, in one-letter code: Probable polyketide biosynthesis zinc-dependent hydrolase PksB (225 aa).

The Zn(2+) site is built by His-62, His-64, Asp-66, His-67, His-123, Asp-140, and His-181.

It belongs to the metallo-beta-lactamase superfamily. It depends on Zn(2+) as a cofactor.

It localises to the cytoplasm. It participates in antibiotic biosynthesis; bacillaene biosynthesis. Its function is as follows. Probably involved in some intermediate steps for the synthesis of the antibiotic polyketide bacillaene which is involved in secondary metabolism. In Bacillus subtilis (strain 168), this protein is Probable polyketide biosynthesis zinc-dependent hydrolase PksB (pksB).